Consider the following 379-residue polypeptide: Succinyl-diaminopimelate desuccinylase (379 aa).

Zn(2+) is bound at residue H70. Residue D72 is part of the active site. Zn(2+) is bound at residue D103. Catalysis depends on E137, which acts as the Proton acceptor. Residues E138, E166, and H352 each contribute to the Zn(2+) site.

The protein belongs to the peptidase M20A family. DapE subfamily. Homodimer. Zn(2+) serves as cofactor. Co(2+) is required as a cofactor.

It catalyses the reaction N-succinyl-(2S,6S)-2,6-diaminopimelate + H2O = (2S,6S)-2,6-diaminopimelate + succinate. It functions in the pathway amino-acid biosynthesis; L-lysine biosynthesis via DAP pathway; LL-2,6-diaminopimelate from (S)-tetrahydrodipicolinate (succinylase route): step 3/3. In terms of biological role, catalyzes the hydrolysis of N-succinyl-L,L-diaminopimelic acid (SDAP), forming succinate and LL-2,6-diaminopimelate (DAP), an intermediate involved in the bacterial biosynthesis of lysine and meso-diaminopimelic acid, an essential component of bacterial cell walls. This is Succinyl-diaminopimelate desuccinylase from Paraburkholderia xenovorans (strain LB400).